The following is a 195-amino-acid chain: 7-methyl-GTP pyrophosphatase (195 aa).

The active-site Proton acceptor is Asp70.

This sequence belongs to the Maf family. YceF subfamily. The cofactor is a divalent metal cation.

Its subcellular location is the cytoplasm. It catalyses the reaction N(7)-methyl-GTP + H2O = N(7)-methyl-GMP + diphosphate + H(+). Nucleoside triphosphate pyrophosphatase that hydrolyzes 7-methyl-GTP (m(7)GTP). May have a dual role in cell division arrest and in preventing the incorporation of modified nucleotides into cellular nucleic acids. The protein is 7-methyl-GTP pyrophosphatase of Shewanella sp. (strain MR-7).